A 458-amino-acid chain; its full sequence is Cysteine--tRNA ligase (458 aa).

Position 27 (C27) interacts with Zn(2+). Residues 29–39 carry the 'HIGH' region motif; that stretch reads ITPQSEPHIGH. Residues C207, H232, and E236 each coordinate Zn(2+). Positions 265–269 match the 'KMSKS' region motif; the sequence is KMSKS. ATP is bound at residue K268.

Belongs to the class-I aminoacyl-tRNA synthetase family. Monomer. It depends on Zn(2+) as a cofactor.

The protein localises to the cytoplasm. The enzyme catalyses tRNA(Cys) + L-cysteine + ATP = L-cysteinyl-tRNA(Cys) + AMP + diphosphate. This Dehalococcoides mccartyi (strain ATCC BAA-2266 / KCTC 15142 / 195) (Dehalococcoides ethenogenes (strain 195)) protein is Cysteine--tRNA ligase.